An 853-amino-acid polypeptide reads, in one-letter code: DNA mismatch repair protein MutS (853 aa).

Residue 614–621 participates in ATP binding; sequence GPNMGGKS.

The protein belongs to the DNA mismatch repair MutS family.

Functionally, this protein is involved in the repair of mismatches in DNA. It is possible that it carries out the mismatch recognition step. This protein has a weak ATPase activity. In Escherichia coli (strain K12 / MC4100 / BW2952), this protein is DNA mismatch repair protein MutS.